The sequence spans 73 residues: UPF0346 protein Lreu_0775 (73 aa).

Belongs to the UPF0346 family.

The protein is UPF0346 protein Lreu_0775 of Limosilactobacillus reuteri (strain DSM 20016) (Lactobacillus reuteri).